We begin with the raw amino-acid sequence, 697 residues long: DNA ligase (697 aa).

NAD(+) contacts are provided by residues 44 to 48 (DGEFD), 93 to 94 (SL), and Glu123. Catalysis depends on Lys125, which acts as the N6-AMP-lysine intermediate. The NAD(+) site is built by Arg146, Glu186, Lys302, and Lys326. 4 residues coordinate Zn(2+): Cys420, Cys423, Cys439, and Cys445. The region spanning 609–697 (SIPRNLEGLS…GPDAVTDSGV (89 aa)) is the BRCT domain.

This sequence belongs to the NAD-dependent DNA ligase family. LigA subfamily. Mg(2+) is required as a cofactor. The cofactor is Mn(2+).

It catalyses the reaction NAD(+) + (deoxyribonucleotide)n-3'-hydroxyl + 5'-phospho-(deoxyribonucleotide)m = (deoxyribonucleotide)n+m + AMP + beta-nicotinamide D-nucleotide.. In terms of biological role, DNA ligase that catalyzes the formation of phosphodiester linkages between 5'-phosphoryl and 3'-hydroxyl groups in double-stranded DNA using NAD as a coenzyme and as the energy source for the reaction. It is essential for DNA replication and repair of damaged DNA. The protein is DNA ligase of Rhodococcus opacus (strain B4).